A 135-amino-acid polypeptide reads, in one-letter code: DNA-directed RNA polymerase subunit omega (135 aa).

The tract at residues 84 to 106 (IAGHSSHVSPSRSSRHTGLGKSF) is disordered.

The protein belongs to the RNA polymerase subunit omega family. The RNAP catalytic core consists of 2 alpha, 1 beta, 1 beta' and 1 omega subunit. When a sigma factor is associated with the core the holoenzyme is formed, which can initiate transcription.

The enzyme catalyses RNA(n) + a ribonucleoside 5'-triphosphate = RNA(n+1) + diphosphate. In terms of biological role, promotes RNA polymerase assembly. Latches the N- and C-terminal regions of the beta' subunit thereby facilitating its interaction with the beta and alpha subunits. The protein is DNA-directed RNA polymerase subunit omega of Anaplasma phagocytophilum (strain HZ).